The primary structure comprises 471 residues: Tryptophanase (471 aa).

N6-acetyllysine occurs at positions 5, 115, and 156. Position 270 is an N6-(pyridoxal phosphate)lysine (Lys-270). Lys-450 is modified (N6-acetyllysine).

It belongs to the beta-eliminating lyase family. In terms of assembly, homotetramer. The cofactor is pyridoxal 5'-phosphate.

It catalyses the reaction L-tryptophan + H2O = indole + pyruvate + NH4(+). It functions in the pathway amino-acid degradation; L-tryptophan degradation via pyruvate pathway; indole and pyruvate from L-tryptophan: step 1/1. The polypeptide is Tryptophanase (Escherichia coli O6:H1 (strain CFT073 / ATCC 700928 / UPEC)).